Here is a 475-residue protein sequence, read N- to C-terminus: NAD-dependent histone deacetylase sir2 (475 aa).

Residues 1–12 (MASNPLDNNMPT) are compositionally biased toward polar residues. The segment at 1 to 35 (MASNPLDNNMPTTPVEEKIPVASYSPSSSGSSSGA) is disordered. Residues 20-35 (PVASYSPSSSGSSSGA) show a composition bias toward low complexity. The residue at position 55 (Ser55) is a Phosphoserine. Residues 139–436 (KLPHFNTFED…AGWLNELQAL (298 aa)) form the Deacetylase sirtuin-type domain. NAD(+) is bound by residues 164 to 183 (GAGI…NGFY) and 246 to 249 (QNID). His266 acts as the Proton acceptor in catalysis. Zn(2+)-binding residues include Cys274, Cys277, Cys298, and Cys301. NAD(+)-binding positions include 373-375 (GTS), 398-400 (SRT), and Cys416.

It belongs to the sirtuin family. Class I subfamily. Zn(2+) serves as cofactor.

The protein resides in the nucleus. It is found in the chromosome. The protein localises to the centromere. It localises to the telomere. The catalysed reaction is N(6)-acetyl-L-lysyl-[protein] + NAD(+) + H2O = 2''-O-acetyl-ADP-D-ribose + nicotinamide + L-lysyl-[protein]. Its function is as follows. Involved in silencing within the mating-type region, at the telomeres, and according to PubMed:12867036 also within centromeric DNA regions. Required for the localization of swi6 to the telomeres, silent mating type region, and according to PubMed:12867036 to the centromeric DNA regions. According to PubMed:15545655 not required for the localization of swi6 to centromeric foci. Deacetylates histone H3 on 'Lys-9' and 'Lys-16' of histone H4. This has a direct role in heterochromatin assembly. The polypeptide is NAD-dependent histone deacetylase sir2 (sir2) (Schizosaccharomyces pombe (strain 972 / ATCC 24843) (Fission yeast)).